A 95-amino-acid polypeptide reads, in one-letter code: Aspartyl/glutamyl-tRNA(Asn/Gln) amidotransferase subunit C (95 aa).

Belongs to the GatC family. As to quaternary structure, heterotrimer of A, B and C subunits.

It catalyses the reaction L-glutamyl-tRNA(Gln) + L-glutamine + ATP + H2O = L-glutaminyl-tRNA(Gln) + L-glutamate + ADP + phosphate + H(+). It carries out the reaction L-aspartyl-tRNA(Asn) + L-glutamine + ATP + H2O = L-asparaginyl-tRNA(Asn) + L-glutamate + ADP + phosphate + 2 H(+). Allows the formation of correctly charged Asn-tRNA(Asn) or Gln-tRNA(Gln) through the transamidation of misacylated Asp-tRNA(Asn) or Glu-tRNA(Gln) in organisms which lack either or both of asparaginyl-tRNA or glutaminyl-tRNA synthetases. The reaction takes place in the presence of glutamine and ATP through an activated phospho-Asp-tRNA(Asn) or phospho-Glu-tRNA(Gln). The protein is Aspartyl/glutamyl-tRNA(Asn/Gln) amidotransferase subunit C of Campylobacter fetus subsp. fetus (strain 82-40).